We begin with the raw amino-acid sequence, 356 residues long: Histidinol-phosphate aminotransferase (356 aa).

Lys-222 is subject to N6-(pyridoxal phosphate)lysine.

Belongs to the class-II pyridoxal-phosphate-dependent aminotransferase family. Histidinol-phosphate aminotransferase subfamily. Homodimer. Pyridoxal 5'-phosphate serves as cofactor.

The enzyme catalyses L-histidinol phosphate + 2-oxoglutarate = 3-(imidazol-4-yl)-2-oxopropyl phosphate + L-glutamate. The protein operates within amino-acid biosynthesis; L-histidine biosynthesis; L-histidine from 5-phospho-alpha-D-ribose 1-diphosphate: step 7/9. The polypeptide is Histidinol-phosphate aminotransferase (Lactiplantibacillus plantarum (strain ATCC BAA-793 / NCIMB 8826 / WCFS1) (Lactobacillus plantarum)).